A 304-amino-acid chain; its full sequence is Uricase (304 aa).

The residue at position 2 (alanine 2) is an N-acetylalanine. N6-acetyllysine; alternate occurs at positions 10 and 23. N6-succinyllysine; alternate occurs at positions 10 and 23. Lysine 23 serves as the catalytic Charge relay system. N6-acetyllysine is present on residues lysine 27 and lysine 36. A phosphoserine mark is found at serine 39 and serine 63. Threonine 68 (charge relay system) is an active-site residue. Positions 68 and 69 each coordinate urate. N6-acetyllysine is present on residues lysine 118, lysine 122, and lysine 164. Residue phenylalanine 170 coordinates urate. Lysine 175 and lysine 185 each carry N6-acetyllysine. Arginine 187 lines the urate pocket. N6-acetyllysine; alternate is present on residues lysine 221 and lysine 228. Residues lysine 221 and lysine 228 each carry the N6-succinyllysine; alternate modification. At serine 232 the chain carries Phosphoserine. Residues valine 235, glutamine 236, and asparagine 262 each contribute to the urate site. Histidine 264 acts as the Charge relay system in catalysis. At lysine 278 the chain carries N6-acetyllysine. Tyrosine 289 is modified (phosphotyrosine). The short motif at 302–304 (SRL) is the Microbody targeting signal element.

The protein belongs to the uricase family.

The protein resides in the peroxisome. It carries out the reaction urate + O2 + H2O = 5-hydroxyisourate + H2O2. Its pathway is purine metabolism; urate degradation; (S)-allantoin from urate: step 1/3. Catalyzes the oxidation of uric acid to 5-hydroxyisourate, which is further processed to form (S)-allantoin. In Macaca fascicularis (Crab-eating macaque), this protein is Uricase (UOX).